The primary structure comprises 296 residues: Phosphatidylglycerol--prolipoprotein diacylglyceryl transferase (296 aa).

4 consecutive transmembrane segments (helical) span residues isoleucine 10–phenylalanine 30, leucine 57–tyrosine 77, valine 92–leucine 112, and leucine 119–glycine 139. Residue arginine 140 participates in a 1,2-diacyl-sn-glycero-3-phospho-(1'-sn-glycerol) binding. 3 consecutive transmembrane segments (helical) span residues glutamine 194–methionine 214, tyrosine 220–valine 240, and tryptophan 254–alanine 274.

It belongs to the Lgt family.

The protein localises to the cell inner membrane. The enzyme catalyses L-cysteinyl-[prolipoprotein] + a 1,2-diacyl-sn-glycero-3-phospho-(1'-sn-glycerol) = an S-1,2-diacyl-sn-glyceryl-L-cysteinyl-[prolipoprotein] + sn-glycerol 1-phosphate + H(+). Its pathway is protein modification; lipoprotein biosynthesis (diacylglyceryl transfer). In terms of biological role, catalyzes the transfer of the diacylglyceryl group from phosphatidylglycerol to the sulfhydryl group of the N-terminal cysteine of a prolipoprotein, the first step in the formation of mature lipoproteins. In Xanthomonas oryzae pv. oryzae (strain MAFF 311018), this protein is Phosphatidylglycerol--prolipoprotein diacylglyceryl transferase.